The sequence spans 274 residues: WIMGHMVNAIEQVDEFLNLGANAIEFDIDFDKDGIAQITHHGIPCDCGRKCTKKAIFTECLDNIRQVTTPDDPKFREQLVLLALDLKLQRISSAKAYRAGEDVAKKLLDHYWQRGNSRARAYILLNIPLVEDYEFIRAFKDTLKNEGYESYNDKVGINFTGNEDLDKIRDVLEILGIHKQVWQADGITSCFARGTERLKEALEKRDTPGYNYINKVYAWTLVRKSIMRRSLRLGVDGVMSNNPDRVIKVLKEKEFADKFRLATYNDNPWEKFRG.

Residue His-5 is part of the active site. Positions 25 and 27 each coordinate Mg(2+). His-41 (nucleophile) is an active-site residue. 2 disulfide bridges follow: Cys-45–Cys-51 and Cys-47–Cys-190. Asp-85 lines the Mg(2+) pocket.

Belongs to the arthropod phospholipase D family. Class II subfamily. Requires Mg(2+) as cofactor. As to expression, expressed by the venom gland.

The protein localises to the secreted. The enzyme catalyses an N-(acyl)-sphingosylphosphocholine = an N-(acyl)-sphingosyl-1,3-cyclic phosphate + choline. It carries out the reaction an N-(acyl)-sphingosylphosphoethanolamine = an N-(acyl)-sphingosyl-1,3-cyclic phosphate + ethanolamine. The catalysed reaction is a 1-acyl-sn-glycero-3-phosphocholine = a 1-acyl-sn-glycero-2,3-cyclic phosphate + choline. It catalyses the reaction a 1-acyl-sn-glycero-3-phosphoethanolamine = a 1-acyl-sn-glycero-2,3-cyclic phosphate + ethanolamine. Functionally, dermonecrotic toxins cleave the phosphodiester linkage between the phosphate and headgroup of certain phospholipids (sphingolipid and lysolipid substrates), forming an alcohol (often choline) and a cyclic phosphate. This toxin acts on sphingomyelin (SM). It may also act on ceramide phosphoethanolamine (CPE), lysophosphatidylcholine (LPC) and lysophosphatidylethanolamine (LPE), but not on lysophosphatidylserine (LPS), and lysophosphatidylglycerol (LPG). It acts by transphosphatidylation, releasing exclusively cyclic phosphate products as second products. Induces dermonecrosis, hemolysis, increased vascular permeability, edema, inflammatory response, and platelet aggregation. The polypeptide is Dermonecrotic toxin SdSicTox-betaIIB1biii (Sicarius cf. damarensis (strain GJB-2008) (Six-eyed sand spider)).